A 227-amino-acid polypeptide reads, in one-letter code: Protein GrpE (227 aa).

The segment covering 1-18 (MTQGNQKTEGNPPEQVTV) has biased composition (polar residues). Disordered stretches follow at residues 1–57 (MTQG…GAAT) and 193–227 (TEEG…ASGD). The span at 19–35 (TDKRRIDPETGEVRHVP) shows a compositional bias: basic and acidic residues. Low complexity-rich tracts occupy residues 41–50 (GGTAPQAATA) and 199–213 (EAAA…AAET).

It belongs to the GrpE family. As to quaternary structure, homodimer.

It localises to the cytoplasm. Its function is as follows. Participates actively in the response to hyperosmotic and heat shock by preventing the aggregation of stress-denatured proteins, in association with DnaK and GrpE. It is the nucleotide exchange factor for DnaK and may function as a thermosensor. Unfolded proteins bind initially to DnaJ; upon interaction with the DnaJ-bound protein, DnaK hydrolyzes its bound ATP, resulting in the formation of a stable complex. GrpE releases ADP from DnaK; ATP binding to DnaK triggers the release of the substrate protein, thus completing the reaction cycle. Several rounds of ATP-dependent interactions between DnaJ, DnaK and GrpE are required for fully efficient folding. This is Protein GrpE from Mycolicibacterium paratuberculosis (strain ATCC BAA-968 / K-10) (Mycobacterium paratuberculosis).